A 144-amino-acid chain; its full sequence is Large ribosomal subunit protein uL16 (144 aa).

It belongs to the universal ribosomal protein uL16 family. In terms of assembly, part of the 50S ribosomal subunit.

Functionally, binds 23S rRNA and is also seen to make contacts with the A and possibly P site tRNAs. In Natranaerobius thermophilus (strain ATCC BAA-1301 / DSM 18059 / JW/NM-WN-LF), this protein is Large ribosomal subunit protein uL16.